Here is a 263-residue protein sequence, read N- to C-terminus: 3-methyl-2-oxobutanoate hydroxymethyltransferase (263 aa).

Positions 44 and 83 each coordinate Mg(2+). 3-methyl-2-oxobutanoate contacts are provided by residues 44–45 (DS), aspartate 83, and lysine 113. Glutamate 115 serves as a coordination point for Mg(2+). The active-site Proton acceptor is the glutamate 183.

The protein belongs to the PanB family. Homodecamer; pentamer of dimers. Requires Mg(2+) as cofactor.

It localises to the cytoplasm. It carries out the reaction 3-methyl-2-oxobutanoate + (6R)-5,10-methylene-5,6,7,8-tetrahydrofolate + H2O = 2-dehydropantoate + (6S)-5,6,7,8-tetrahydrofolate. It functions in the pathway cofactor biosynthesis; (R)-pantothenate biosynthesis; (R)-pantoate from 3-methyl-2-oxobutanoate: step 1/2. Its function is as follows. Catalyzes the reversible reaction in which hydroxymethyl group from 5,10-methylenetetrahydrofolate is transferred onto alpha-ketoisovalerate to form ketopantoate. The polypeptide is 3-methyl-2-oxobutanoate hydroxymethyltransferase (Trichodesmium erythraeum (strain IMS101)).